The following is a 372-amino-acid chain: Histidinol-phosphate aminotransferase (372 aa).

At Lys-230 the chain carries N6-(pyridoxal phosphate)lysine.

The protein belongs to the class-II pyridoxal-phosphate-dependent aminotransferase family. Histidinol-phosphate aminotransferase subfamily. Homodimer. Requires pyridoxal 5'-phosphate as cofactor.

The enzyme catalyses L-histidinol phosphate + 2-oxoglutarate = 3-(imidazol-4-yl)-2-oxopropyl phosphate + L-glutamate. The protein operates within amino-acid biosynthesis; L-histidine biosynthesis; L-histidine from 5-phospho-alpha-D-ribose 1-diphosphate: step 7/9. This is Histidinol-phosphate aminotransferase from Paenarthrobacter aurescens (strain TC1).